The sequence spans 185 residues: Elongation factor P (185 aa).

The protein belongs to the elongation factor P family.

Its subcellular location is the cytoplasm. It participates in protein biosynthesis; polypeptide chain elongation. Functionally, involved in peptide bond synthesis. Stimulates efficient translation and peptide-bond synthesis on native or reconstituted 70S ribosomes in vitro. Probably functions indirectly by altering the affinity of the ribosome for aminoacyl-tRNA, thus increasing their reactivity as acceptors for peptidyl transferase. The polypeptide is Elongation factor P (Limosilactobacillus reuteri (strain DSM 20016) (Lactobacillus reuteri)).